A 473-amino-acid polypeptide reads, in one-letter code: Vasculin (473 aa).

Disordered stretches follow at residues 1 to 25 (MAQH…SSLN), 45 to 169 (RRHN…KSRA), and 191 to 342 (VGNL…QERD). At S49 the chain carries Phosphoserine. R87 bears the Omega-N-methylarginine mark. Positions 93-107 (GSSRSRSSIFHSGKS) are enriched in low complexity. Basic and acidic residues predominate over residues 119 to 133 (ETGRKEDKRERKQFE). Polar residues-rich tracts occupy residues 194–204 (LPSQPVKNGTG) and 251–286 (AFKS…QQPR). A phosphoserine mark is found at S274, S276, S322, and S381. Positions 293-329 (MRTDKKSEFLKALKRDRVEEEHEDESRAGSEKDDDSF) are enriched in basic and acidic residues. Positions 444–473 (GPWKNSTFKPTTENDDTETSSSDTSDDDDV) are disordered. A compositionally biased stretch (acidic residues) spans 456 to 473 (ENDDTETSSSDTSDDDDV).

Belongs to the vasculin family. In terms of assembly, interacts with GTF2B, GTF2F2, RNA polymerase II and TBP.

It is found in the nucleus. In terms of biological role, functions as a GC-rich promoter-specific transactivating transcription factor. The chain is Vasculin (GPBP1) from Pongo abelii (Sumatran orangutan).